We begin with the raw amino-acid sequence, 299 residues long: N-carbamoylputrescine amidase (299 aa).

In terms of domain architecture, CN hydrolase spans 10–268 (VVVSSLQFAC…EAVLVAQFDL (259 aa)). E49 (proton acceptor) is an active-site residue. K122 serves as the catalytic Proton donor. C159 (nucleophile) is an active-site residue.

It belongs to the carbon-nitrogen hydrolase superfamily. Homooctamer (isoform 2). Expressed in roots, stems, leaves and flowers.

The catalysed reaction is N-carbamoylputrescine + H2O + 2 H(+) = putrescine + NH4(+) + CO2. Its pathway is amine and polyamine biosynthesis; putrescine biosynthesis via agmatine pathway; putrescine from N-carbamoylputrescine (amidase route): step 1/1. In terms of biological role, involved in polyamine biosynthesis. Catalyzes the hydrolysis of N-carbamoylputrescine to produce putrescine and ammonia. The chain is N-carbamoylputrescine amidase from Arabidopsis thaliana (Mouse-ear cress).